A 95-amino-acid chain; its full sequence is Small ribosomal subunit protein bS20 (95 aa).

Disordered stretches follow at residues 1–26 and 76–95; these read MALR…RSRK and KSRL…AQPA. The segment covering 80-95 has biased composition (low complexity); the sequence is AKALNKAKAAQAAQPA.

This sequence belongs to the bacterial ribosomal protein bS20 family.

Functionally, binds directly to 16S ribosomal RNA. In Deinococcus geothermalis (strain DSM 11300 / CIP 105573 / AG-3a), this protein is Small ribosomal subunit protein bS20.